A 321-amino-acid chain; its full sequence is CPX chromosomal region candidate gene 1 protein homolog (321 aa).

A disordered region spans residues 1–83 (MSSPTKEGSD…TEIQKDQREE (83 aa)). Composition is skewed to polar residues over residues 21–32 (NEPSNDCTTDIE) and 44–60 (VETN…TSQE).

This Macaca fascicularis (Crab-eating macaque) protein is CPX chromosomal region candidate gene 1 protein homolog (CPXCR1).